The sequence spans 1207 residues: DNA-directed RNA polymerase subunit beta' (1207 aa).

Zn(2+) is bound by residues Cys60, Cys62, Cys75, and Cys78. Residues Asp450, Asp452, and Asp454 each coordinate Mg(2+). 4 residues coordinate Zn(2+): Cys818, Cys892, Cys899, and Cys902.

The protein belongs to the RNA polymerase beta' chain family. In terms of assembly, the RNAP catalytic core consists of 2 alpha, 1 beta, 1 beta' and 1 omega subunit. When a sigma factor is associated with the core the holoenzyme is formed, which can initiate transcription. It depends on Mg(2+) as a cofactor. Requires Zn(2+) as cofactor.

The catalysed reaction is RNA(n) + a ribonucleoside 5'-triphosphate = RNA(n+1) + diphosphate. Its function is as follows. DNA-dependent RNA polymerase catalyzes the transcription of DNA into RNA using the four ribonucleoside triphosphates as substrates. The protein is DNA-directed RNA polymerase subunit beta' of Lactococcus lactis subsp. cremoris (strain MG1363).